We begin with the raw amino-acid sequence, 483 residues long: Glutamyl-tRNA(Gln) amidotransferase subunit A (483 aa).

Residues K76 and S151 each act as charge relay system in the active site. The Acyl-ester intermediate role is filled by S175.

It belongs to the amidase family. GatA subfamily. In terms of assembly, heterotrimer of A, B and C subunits.

The enzyme catalyses L-glutamyl-tRNA(Gln) + L-glutamine + ATP + H2O = L-glutaminyl-tRNA(Gln) + L-glutamate + ADP + phosphate + H(+). Its function is as follows. Allows the formation of correctly charged Gln-tRNA(Gln) through the transamidation of misacylated Glu-tRNA(Gln) in organisms which lack glutaminyl-tRNA synthetase. The reaction takes place in the presence of glutamine and ATP through an activated gamma-phospho-Glu-tRNA(Gln). This chain is Glutamyl-tRNA(Gln) amidotransferase subunit A, found in Pseudomonas putida (strain W619).